A 251-amino-acid polypeptide reads, in one-letter code: Large ribosomal subunit protein uL16m (251 aa).

Residues 1–29 constitute a mitochondrion transit peptide; that stretch reads MWRLLARASAPLLRVPLSDSWALLPASAG.

Belongs to the universal ribosomal protein uL16 family. In terms of assembly, component of the mitochondrial large ribosomal subunit (mt-LSU). Mature mammalian 55S mitochondrial ribosomes consist of a small (28S) and a large (39S) subunit. The 28S small subunit contains a 12S ribosomal RNA (12S mt-rRNA) and 30 different proteins. The 39S large subunit contains a 16S rRNA (16S mt-rRNA), a copy of mitochondrial valine transfer RNA (mt-tRNA(Val)), which plays an integral structural role, and 52 different proteins.

The protein localises to the mitochondrion. This chain is Large ribosomal subunit protein uL16m (MRPL16), found in Homo sapiens (Human).